The primary structure comprises 341 residues: Serine/threonine-protein kinase PDIK1L (341 aa).

The 327-residue stretch at 8 to 334 (YDLIREVGRG…LELRLVQIAF (327 aa)) folds into the Protein kinase domain. Residues 14–22 (VGRGSYGVV) and K37 contribute to the ATP site. Catalysis depends on D164, which acts as the Proton acceptor.

It belongs to the protein kinase superfamily. Ser/Thr protein kinase family. Expressed in liver, kidney, pancreas, spleen, thymus and prostate.

The protein localises to the nucleus. The enzyme catalyses L-seryl-[protein] + ATP = O-phospho-L-seryl-[protein] + ADP + H(+). It carries out the reaction L-threonyl-[protein] + ATP = O-phospho-L-threonyl-[protein] + ADP + H(+). The protein is Serine/threonine-protein kinase PDIK1L (PDIK1L) of Homo sapiens (Human).